A 375-amino-acid chain; its full sequence is MQCALYDAGRCRSCQWITQLIPEQLSAKTADLKNLLADFSVEEWCESVSGPEQGFRNKAKMVVSGSVEKPLLGMLHRDGTPEDLCDCPLYPSSFAPVFAALKPFIARAGLTPYNVARKRGELKYILLTESQSDGGMMLRFVLRSETKLAQLRKALPWLQEQLPQLKVITANIQPIHMAIMEGETEIYLTEQQALAERFNDVPLWIRPQSFFQTNPVVASQLYATARDWVRQLPVKHMWDLFCGVGGFGLHCATPDMQLTGIEIAPEAIACAKQSAAELGLTRLQFQALDSTQFATTQGEVPELVLVNPPRRGIGKPLCDYLSTMAPRFIIYSSCNAQTMTKDIRELSGYRIERVQLFDMFPHTAHYEVLTLLVKQ.

[4Fe-4S] cluster-binding residues include cysteine 3, cysteine 11, cysteine 14, and cysteine 87. 4 residues coordinate S-adenosyl-L-methionine: glutamine 212, phenylalanine 241, glutamate 262, and asparagine 307. The active-site Nucleophile is cysteine 334.

This sequence belongs to the class I-like SAM-binding methyltransferase superfamily. RNA M5U methyltransferase family. RlmC subfamily.

It catalyses the reaction uridine(747) in 23S rRNA + S-adenosyl-L-methionine = 5-methyluridine(747) in 23S rRNA + S-adenosyl-L-homocysteine + H(+). In terms of biological role, catalyzes the formation of 5-methyl-uridine at position 747 (m5U747) in 23S rRNA. This Escherichia fergusonii (strain ATCC 35469 / DSM 13698 / CCUG 18766 / IAM 14443 / JCM 21226 / LMG 7866 / NBRC 102419 / NCTC 12128 / CDC 0568-73) protein is 23S rRNA (uracil(747)-C(5))-methyltransferase RlmC.